The sequence spans 432 residues: GTPase Obg (432 aa).

Residues 1 to 158 (MFVDQIKIEV…RKLKLELKVL (158 aa)) form the Obg domain. An OBG-type G domain is found at 159–335 (ADVGLVGFPS…LTHRTADVLE (177 aa)). Residues 165 to 172 (GFPSVGKS), 190 to 194 (FTTLV), 212 to 215 (DLPG), 282 to 285 (SKMD), and 316 to 318 (SSL) each bind GTP. Serine 172 and threonine 192 together coordinate Mg(2+). Residues 354 to 432 (TFKEDEPAFK…IEDFTFEFVE (79 aa)) enclose the OCT domain.

This sequence belongs to the TRAFAC class OBG-HflX-like GTPase superfamily. OBG GTPase family. As to quaternary structure, monomer. Mg(2+) is required as a cofactor.

The protein resides in the cytoplasm. In terms of biological role, an essential GTPase which binds GTP, GDP and possibly (p)ppGpp with moderate affinity, with high nucleotide exchange rates and a fairly low GTP hydrolysis rate. Plays a role in control of the cell cycle, stress response, ribosome biogenesis and in those bacteria that undergo differentiation, in morphogenesis control. This chain is GTPase Obg, found in Ligilactobacillus salivarius (strain UCC118) (Lactobacillus salivarius).